We begin with the raw amino-acid sequence, 1012 residues long: Alanine--tRNA ligase, mitochondrial (1012 aa).

The N-terminal 24 residues, 1 to 24 (MYNSAKQLQRVLTAREIRKTFLDH), are a transit peptide targeting the mitochondrion. His656, His660, Cys766, and His770 together coordinate Zn(2+).

Belongs to the class-II aminoacyl-tRNA synthetase family. Monomer. The cofactor is Zn(2+).

It is found in the mitochondrion. The enzyme catalyses tRNA(Ala) + L-alanine + ATP = L-alanyl-tRNA(Ala) + AMP + diphosphate. Its function is as follows. Catalyzes the attachment of alanine to tRNA(Ala) in a two-step reaction: alanine is first activated by ATP to form Ala-AMP and then transferred to the acceptor end of tRNA(Ala). Also edits incorrectly charged tRNA(Ala) via its editing domain. The sequence is that of Alanine--tRNA ligase, mitochondrial from Drosophila melanogaster (Fruit fly).